The primary structure comprises 336 residues: 7,8-didemethyl-8-hydroxy-5-deazariboflavin synthase (336 aa).

The Radical SAM core domain occupies 18 to 249 (ITYSPAYTLV…TSIAIQVPPN (232 aa)). Residues C32, C36, and C39 each contribute to the [4Fe-4S] cluster site.

Belongs to the radical SAM superfamily. CofG family. In terms of assembly, consists of two subunits, CofG and CofH. The cofactor is [4Fe-4S] cluster.

It catalyses the reaction 5-amino-5-(4-hydroxybenzyl)-6-(D-ribitylimino)-5,6-dihydrouracil + S-adenosyl-L-methionine = 7,8-didemethyl-8-hydroxy-5-deazariboflavin + 5'-deoxyadenosine + L-methionine + NH4(+) + H(+). The protein operates within cofactor biosynthesis; coenzyme F0 biosynthesis. Functionally, catalyzes the radical-mediated synthesis of 7,8-didemethyl-8-hydroxy-5-deazariboflavin from 5-amino-5-(4-hydroxybenzyl)-6-(D-ribitylimino)-5,6-dihydrouracil. This chain is 7,8-didemethyl-8-hydroxy-5-deazariboflavin synthase, found in Synechococcus elongatus (strain ATCC 33912 / PCC 7942 / FACHB-805) (Anacystis nidulans R2).